A 336-amino-acid chain; its full sequence is DNA repair protein RAD51 homolog A (336 aa).

The HhH domain maps to 45-74 (TVEAVAYAPKKELLNIKGISEAKAEKILAE). 124–131 (GEFRTGKT) serves as a coordination point for ATP. The short motif at 242–257 (LARFLRMLLRLADEFG) is the Nuclear export signal element.

It belongs to the RecA family. RAD51 subfamily. Forms linear homooligomers, giving rise to a RAD51 nucleoprotein filament, which is essential for strand-pairing reactions during DNA recombination.

It localises to the nucleus. Its subcellular location is the cytoplasm. It is found in the chromosome. Plays an important role in homologous strand exchange, a key step in DNA repair through homologous recombination (HR). Binds to single-stranded DNA in an ATP-dependent manner to form nucleoprotein filaments which are essential for the homology search and strand exchange. Catalyzes the recognition of homology and strand exchange between homologous DNA partners to form a joint molecule between a processed DNA break and the repair template. Recruited to resolve stalled replication forks during replication stress. Also involved in interstrand cross-link repair. The sequence is that of DNA repair protein RAD51 homolog A (rad51-a) from Xenopus laevis (African clawed frog).